A 436-amino-acid chain; its full sequence is Enolase (436 aa).

2 residues coordinate substrate: His159 and Glu168. Glu211 (proton donor) is an active-site residue. Mg(2+) contacts are provided by Asp246, Glu295, and Asp320. Glu295 and Asp320 together coordinate substrate. The Proton acceptor role is filled by Lys345. Substrate is bound by residues Ser372–Ser375 and Lys396.

Belongs to the enolase family. As to quaternary structure, homodimer. Mg(2+) is required as a cofactor.

The protein localises to the cytoplasm. The enzyme catalyses (2R)-2-phosphoglycerate = phosphoenolpyruvate + H2O. It participates in carbohydrate degradation; glycolysis; pyruvate from D-glyceraldehyde 3-phosphate: step 4/5. In Cunninghamella elegans, this protein is Enolase.